Consider the following 179-residue polypeptide: MYEYLDRRYALALYEVAEEKNKVEEYLNDLREICDIIYGNNELYEIIKHPQISTVRKKKTFRNIFEGKIDDELLSFLMVLIEKDRILYLREKLKEMEKIHLERNNTLLAEVKSVVPLTEDEVTRLVAKLENKYSKKILLKQEIDKSIIGGLYVRVGDDVIDGTVKSRLDDMKQIMLKRE.

The protein belongs to the ATPase delta chain family. In terms of assembly, F-type ATPases have 2 components, F(1) - the catalytic core - and F(0) - the membrane proton channel. F(1) has five subunits: alpha(3), beta(3), gamma(1), delta(1), epsilon(1). F(0) has three main subunits: a(1), b(2) and c(10-14). The alpha and beta chains form an alternating ring which encloses part of the gamma chain. F(1) is attached to F(0) by a central stalk formed by the gamma and epsilon chains, while a peripheral stalk is formed by the delta and b chains.

It is found in the cell membrane. Its function is as follows. F(1)F(0) ATP synthase produces ATP from ADP in the presence of a proton or sodium gradient. F-type ATPases consist of two structural domains, F(1) containing the extramembraneous catalytic core and F(0) containing the membrane proton channel, linked together by a central stalk and a peripheral stalk. During catalysis, ATP synthesis in the catalytic domain of F(1) is coupled via a rotary mechanism of the central stalk subunits to proton translocation. This protein is part of the stalk that links CF(0) to CF(1). It either transmits conformational changes from CF(0) to CF(1) or is implicated in proton conduction. This chain is ATP synthase subunit delta, found in Clostridium perfringens (strain ATCC 13124 / DSM 756 / JCM 1290 / NCIMB 6125 / NCTC 8237 / Type A).